The primary structure comprises 101 residues: Small ribosomal subunit protein uS14 (101 aa).

This sequence belongs to the universal ribosomal protein uS14 family. In terms of assembly, part of the 30S ribosomal subunit. Contacts proteins S3 and S10.

In terms of biological role, binds 16S rRNA, required for the assembly of 30S particles and may also be responsible for determining the conformation of the 16S rRNA at the A site. This is Small ribosomal subunit protein uS14 from Polynucleobacter necessarius subsp. necessarius (strain STIR1).